Reading from the N-terminus, the 843-residue chain is Neuroligin-1 (843 aa).

A signal peptide spans 1 to 45; that stretch reads MALPRCMWPNYVWRAMMACVVHRGSGAPLTLCLLGCLLQTFHVLS. Topologically, residues 46–697 are extracellular; it reads QKLDDVDPLV…DQRDYSTELS (652 aa). Asn109 carries an N-linked (GlcNAc...) (complex) asparagine glycan. Disulfide bonds link Cys117–Cys153 and Cys172–Cys181. N-linked (GlcNAc...) (complex) asparagine glycosylation is found at Asn303 and Asn343. 2 disulfides stabilise this stretch: Cys342–Cys353 and Cys512–Cys546. N-linked (GlcNAc...) asparagine glycosylation occurs at Asn547. A disordered region spans residues 647–688; that stretch reads TKVPSTDITLRPTRKNSTPVTSAFPTAKQDDPKQQPSPFSVD. The span at 661-670 shows a compositional bias: polar residues; it reads KNSTPVTSAF. Residues Ser683 and Ser686 are each glycosylated (O-linked (GalNAc...) serine). Residues 698–718 form a helical membrane-spanning segment; the sequence is VTIAVGASLLFLNILAFAALY. The Cytoplasmic portion of the chain corresponds to 719 to 843; it reads YKKDKRRHDV…HPHSHSTTRV (125 aa). Residues 822-843 are disordered; that stretch reads GGQNNTLPHPHPHPHSHSTTRV. Positions 831–843 are enriched in basic residues; that stretch reads PHPHPHSHSTTRV.

Belongs to the type-B carboxylesterase/lipase family. Interacts with neurexins NRXN1, NRXN2 and NRXN3. Interaction with neurexins is mediated by heparan sulfate glycan modification on neurexin. Interacts with NLGN3. Interacts (via its C-terminus) with DLG4/PSD-95 (via PDZ domain 3). Interacts with GOPC. Interacts with AIP1 and PDZRN3. In terms of processing, the N-terminus is blocked. Expressed in brain, almost exclusively in neurons, and spinal cord. Detected in pancreas islet beta cells.

Its subcellular location is the cell membrane. It localises to the postsynaptic density. The protein localises to the synaptic cleft. It is found in the synaptic cell membrane. Cell surface protein involved in cell-cell-interactions via its interactions with neurexin family members. Plays a role in synapse function and synaptic signal transmission, and probably mediates its effects by recruiting and clustering other synaptic proteins. May promote the initial formation of synapses, but is not essential for this. In vitro, triggers the de novo formation of presynaptic structures. May be involved in specification of excitatory synapses. Required to maintain wakefulness quality and normal synchrony of cerebral cortex activity during wakefulness and sleep. The protein is involved in nervous system development. The polypeptide is Neuroligin-1 (Nlgn1) (Rattus norvegicus (Rat)).